A 174-amino-acid chain; its full sequence is Transcriptional repressor NrdR (174 aa).

The segment at 3 to 34 is a zinc-finger region; it reads CPFCQHSDTRVIDSRVSEDGTTIRRRRECEAC. An ATP-cone domain is found at 49-139; it reads PTVVKSDGGR…VYRSFQDVAD (91 aa).

The protein belongs to the NrdR family. Requires Zn(2+) as cofactor.

Its function is as follows. Negatively regulates transcription of bacterial ribonucleotide reductase nrd genes and operons by binding to NrdR-boxes. This chain is Transcriptional repressor NrdR, found in Xanthomonas oryzae pv. oryzae (strain MAFF 311018).